A 132-amino-acid chain; its full sequence is MSMNDPLSDMIARIKNAAQRKRSKVSTPASKLRARVLDVLADEGYIRGYSLVEKPGAFPEFEIELKYFDGEPVIAEISRVSKPGRRVYSSIKDLKPIKNGLGISILSTPKGVMSDTAARDANVGGEVLCRVY.

The protein belongs to the universal ribosomal protein uS8 family. As to quaternary structure, part of the 30S ribosomal subunit. Contacts proteins S5 and S12.

One of the primary rRNA binding proteins, it binds directly to 16S rRNA central domain where it helps coordinate assembly of the platform of the 30S subunit. This Caulobacter vibrioides (strain ATCC 19089 / CIP 103742 / CB 15) (Caulobacter crescentus) protein is Small ribosomal subunit protein uS8.